The chain runs to 350 residues: Paired box protein Pax-4 (350 aa).

A DNA-binding region (paired) is located at residues Gly-5 to Leu-131. A PAI subdomain region spans residues Ser-8 to Thr-64. The tract at residues Pro-83–Leu-131 is RED subdomain. Residues Leu-153–Arg-172 are disordered. A DNA-binding region (homeobox) is located at residues Gly-170 to Glu-229. The tract at residues Cys-278–Pro-350 is transcription repression.

The protein belongs to the paired homeobox family.

The protein localises to the nucleus. In terms of biological role, plays an important role in the differentiation and development of pancreatic islet beta cells. Transcriptional repressor that binds to a common element in the glucagon, insulin and somatostatin promoters. Competes with PAX6 for this same promoter binding site. Isoform 2 appears to be a dominant negative form antagonizing PAX4 transcriptional activity. In Homo sapiens (Human), this protein is Paired box protein Pax-4 (PAX4).